A 255-amino-acid chain; its full sequence is Ribosomal RNA large subunit methyltransferase E (255 aa).

S-adenosyl-L-methionine-binding residues include G50, W52, D68, D84, and D108. K148 acts as the Proton acceptor in catalysis. Positions 195-253 constitute a TRAM domain; sequence PVRSGEIYDVTVDSVGRTGDGIAMIQGFAVIVKNASPGERLRIKIGPVKQRFAFASILE.

This sequence belongs to the class I-like SAM-binding methyltransferase superfamily. RNA methyltransferase RlmE family.

Its subcellular location is the cytoplasm. It catalyses the reaction uridine(2552) in 23S rRNA + S-adenosyl-L-methionine = 2'-O-methyluridine(2552) in 23S rRNA + S-adenosyl-L-homocysteine + H(+). Functionally, specifically methylates the uridine in position 2552 of 23S rRNA at the 2'-O position of the ribose in the fully assembled 50S ribosomal subunit. The chain is Ribosomal RNA large subunit methyltransferase E from Methanothrix thermoacetophila (strain DSM 6194 / JCM 14653 / NBRC 101360 / PT) (Methanosaeta thermophila).